The following is a 121-amino-acid chain: MTKDMCEVTYIHEDKVNRAKKDLAKQNPMDVAKVFKALSDDTRVKIAYVLSLEGELCVCDVANIIESSTATASHHLRLLKNLGIAKYRKEGKLVYYSLDDEHVKQLVEKAFLHQREVASIG.

In terms of domain architecture, HTH arsR-type spans 23-118; it reads LAKQNPMDVA…KAFLHQREVA (96 aa). Positions 58 to 77 form a DNA-binding region, H-T-H motif; the sequence is VCDVANIIESSTATASHHLR.

In Staphylococcus aureus, this protein is Cadmium resistance transcriptional regulatory protein CadC homolog (cadC).